A 344-amino-acid polypeptide reads, in one-letter code: Phenylalanine--tRNA ligase alpha subunit (344 aa).

A Mg(2+)-binding site is contributed by E256.

The protein belongs to the class-II aminoacyl-tRNA synthetase family. Phe-tRNA synthetase alpha subunit type 1 subfamily. As to quaternary structure, tetramer of two alpha and two beta subunits. Requires Mg(2+) as cofactor.

It is found in the cytoplasm. The enzyme catalyses tRNA(Phe) + L-phenylalanine + ATP = L-phenylalanyl-tRNA(Phe) + AMP + diphosphate + H(+). This Oceanobacillus iheyensis (strain DSM 14371 / CIP 107618 / JCM 11309 / KCTC 3954 / HTE831) protein is Phenylalanine--tRNA ligase alpha subunit.